The following is a 187-amino-acid chain: Virulence protein ATR13 (187 aa).

An N-terminal signal peptide occupies residues 1-19 (MRLVHAVLLPGIIVFVSNG). The short motif at 38–41 (RQLR) is the RxLR element. The tract at residues 50–92 (LSRASFGLGKAQDPLDKFFRKIINSRKPIETSYSAKGIHEKII) is leucine heptad repeat region. 4 repeat units span residues 93–103 (KAYDRHVFESK), 104–114 (KAHDRHVSKSK), 115–125 (KAHGRHVSKSK), and 126–136 (MAHDRHVSKSE). Positions 93-136 (KAYDRHVFESKKAHDRHVSKSKKAHGRHVSKSKMAHDRHVSKSE) are 4 X 11 AA tandem repeats. The tract at residues 104 to 136 (KAHDRHVSKSKKAHGRHVSKSKMAHDRHVSKSE) is disordered. Basic residues predominate over residues 111 to 125 (SKSKKAHGRHVSKSK). The span at 126–136 (MAHDRHVSKSE) shows a compositional bias: basic and acidic residues. The highly variable C-terminus domain stretch occupies residues 137–187 (KAPIQYASVADYLKKIYPGTDIERIVSTLKRHDEVGAKDLGAKLQTAVASQ).

The protein belongs to the RxLR effector family.

It is found in the secreted. It localises to the host nucleus. Its subcellular location is the host nucleolus. The protein localises to the host cytoplasm. Its function is as follows. Secreted effector that acts as an elicitor of hypersensitive response (HR) specifically on plants carrying defense protein RPP13. Recognition of ATR13 by RPP13 initiates defense responses that are effective against oomycete, bacterial and viral pathogens. Due to high polymorphism, ATR13-Emoy2 does not recognize RPP13-Nd, the RPP13 defense protein from Arabidopsis thaliana ecotype Niederzenz. ATR13-Emoy2 is recognized by RPP13 variants RPP13-UKID44, RPP13-UKID65 and RPP13-UKID71. This is Virulence protein ATR13 from Hyaloperonospora arabidopsidis (strain Emoy2) (Downy mildew agent).